A 377-amino-acid chain; its full sequence is Prostaglandin E synthase 2 (377 aa).

Topologically, residues 1–65 (MAAACTRTLG…LAAPVRGSGR (65 aa)) are lumenal. Residues 66–83 (VLGCAFLLGGGFGLYQTI) form a helical membrane-spanning segment. The GST N-terminal domain maps to 105–182 (LKLTLYQYKT…ALKTYISSKD (78 aa)). Residues Val-153 and 166–167 (DS) each bind glutathione. One can recognise a GST C-terminal domain in the interval 266–377 (YIVREGKFGS…RMQKATQHVS (112 aa)).

It belongs to the GST superfamily. In terms of assembly, homodimer.

It is found in the golgi apparatus membrane. The enzyme catalyses prostaglandin H2 = prostaglandin E2. The catalysed reaction is prostaglandin H2 = (12S)-hydroxy-(5Z,8E,10E)-heptadecatrienoate + malonaldehyde. Its pathway is lipid metabolism; prostaglandin biosynthesis. Its activity is regulated as follows. Isomerase activity is increased by sulfhydril compounds. Dithiothreitol (DTT) is most effective, followed by glutathione (GSH) and 2-mercaptoethanol. Functionally, isomerase that catalyzes the conversion of PGH2 into the more stable prostaglandin E2 (PGE2) (in vitro). The biological function and the GSH-dependent property of PTGES2 is still under debate. In vivo, PTGES2 could form a complex with GSH and heme and would not participate in PGE2 synthesis but would catalyze the degradation of prostaglandin E2 H2 (PGH2) to 12(S)-hydroxy-5(Z),8(E),10(E)-heptadecatrienoic acid (HHT) and malondialdehyde (MDA). The protein is Prostaglandin E synthase 2 (ptges2) of Danio rerio (Zebrafish).